The primary structure comprises 337 residues: Diacylglycerol O-acyltransferase 2-like protein 6 (337 aa).

The next 2 helical transmembrane spans lie at 22 to 42 (IPVY…FLLF) and 102 to 122 (YIIA…NFAT).

Belongs to the diacylglycerol acyltransferase family. In terms of tissue distribution, expressed in all tissues tested except pancreas.

Its subcellular location is the endoplasmic reticulum membrane. The catalysed reaction is 1,2-di-(9Z-octadecenoyl)-sn-glycerol + (9Z)-octadecenoyl-CoA = 1,2,3-tri-(9Z-octadecenoyl)-glycerol + CoA. It catalyses the reaction 1-O-(9Z-octadecenyl)-glycerol + (9Z)-octadecenoyl-CoA = 1-O-(9Z-octadecyl)-3-(9Z-octadecenoyl)-glycerol + CoA. The enzyme catalyses 1-(9Z-octadecenoyl)-glycerol + (9Z)-octadecenoyl-CoA = 1,2-di-(9Z-octadecenoyl)-glycerol + CoA. Functionally, diglyceride acyltransferase that uses fatty acyl-CoA as substrate. Particularly active with oleate as a substrate. Has no wax synthase activity to produce wax esters. Able to use 1-monoalkylglycerol (1-MAkG) as an acyl acceptor for the synthesis of monoalkyl-monoacylglycerol (MAMAG). This Homo sapiens (Human) protein is Diacylglycerol O-acyltransferase 2-like protein 6.